Consider the following 140-residue polypeptide: MLEIDNQTPLESDFLLLEKIANVLAPTQIIELILVSGETMREINRDLRGCDYATDVLSFPLEAIPHTPLGSVVINVPLAQENALKLGHSLENEIALLFIHGVLHLLGYDHEKDKGEQRQKEGELIKAFNLPLSLIERTQD.

Residues histidine 100, histidine 104, and histidine 110 each coordinate Zn(2+).

It belongs to the endoribonuclease YbeY family. Zn(2+) is required as a cofactor.

The protein resides in the cytoplasm. In terms of biological role, single strand-specific metallo-endoribonuclease involved in late-stage 70S ribosome quality control and in maturation of the 3' terminus of the 16S rRNA. In Helicobacter pylori (strain P12), this protein is Endoribonuclease YbeY.